A 293-amino-acid polypeptide reads, in one-letter code: Energy-coupling factor transporter ATP-binding protein EcfA2 (293 aa).

In terms of domain architecture, ABC transporter spans 3 to 246; the sequence is ITFQKVEHRY…ADELEKIGVD (244 aa). 40-47 contributes to the ATP binding site; the sequence is GHTGSGKS.

Belongs to the ABC transporter superfamily. Energy-coupling factor EcfA family. Forms a stable energy-coupling factor (ECF) transporter complex composed of 2 membrane-embedded substrate-binding proteins (S component), 2 ATP-binding proteins (A component) and 2 transmembrane proteins (T component).

Its subcellular location is the cell membrane. ATP-binding (A) component of a common energy-coupling factor (ECF) ABC-transporter complex. Unlike classic ABC transporters this ECF transporter provides the energy necessary to transport a number of different substrates. In Bacillus thuringiensis (strain Al Hakam), this protein is Energy-coupling factor transporter ATP-binding protein EcfA2.